The chain runs to 220 residues: MTAALQALLDPTALSLGLPTPAINKEEYLAICLAALACTRAGKALVGVGGQQQVQACNKWLCPAPAAPEELRFRCTVCGKAFASYQALGGHKSSHRKPPSPGDHYGAAAAAQQLASAGDSKEDSASSAAGSTGPHRCTICRRSFATGQALGGHKRCHYWDGTSVSVSVSASASAASSAVRNFDLNLMPLPESTAAAGIKRWAEEEEVQSPLPVKKLRMSN.

Residues 73 to 95 form a C2H2-type 1 zinc finger; the sequence is FRCTVCGKAFASYQALGGHKSSH. A disordered region spans residues 90–134; the sequence is GHKSSHRKPPSPGDHYGAAAAAQQLASAGDSKEDSASSAAGSTGP. Positions 107–117 are enriched in low complexity; sequence AAAAAQQLASA. A C2H2-type 2 zinc finger spans residues 135-157; that stretch reads HRCTICRRSFATGQALGGHKRCH.

In terms of biological role, probable transcription factor involved in abscisic acid (ABA) signaling. Required for the regulation of the cross-talk between NADPH oxidase, hydrogen peroxide and MAP kinase in ABA signaling. Regulates the expression of the NADPH oxidase genes RBOHB and RBOHE, and the MAPK genes MPK1, MPK4, MPK5, MPK7 and MPK14. Regulates ABA-induced hydrogen peroxide production and antioxidant defense. Required for tolerance to water stress and oxidative stress. The protein is Zinc finger protein 36 of Oryza sativa subsp. japonica (Rice).